A 248-amino-acid chain; its full sequence is Leucyl/phenylalanyl-tRNA--protein transferase (248 aa).

Belongs to the L/F-transferase family.

Its subcellular location is the cytoplasm. The catalysed reaction is N-terminal L-lysyl-[protein] + L-leucyl-tRNA(Leu) = N-terminal L-leucyl-L-lysyl-[protein] + tRNA(Leu) + H(+). The enzyme catalyses N-terminal L-arginyl-[protein] + L-leucyl-tRNA(Leu) = N-terminal L-leucyl-L-arginyl-[protein] + tRNA(Leu) + H(+). It carries out the reaction L-phenylalanyl-tRNA(Phe) + an N-terminal L-alpha-aminoacyl-[protein] = an N-terminal L-phenylalanyl-L-alpha-aminoacyl-[protein] + tRNA(Phe). Functionally, functions in the N-end rule pathway of protein degradation where it conjugates Leu, Phe and, less efficiently, Met from aminoacyl-tRNAs to the N-termini of proteins containing an N-terminal arginine or lysine. This is Leucyl/phenylalanyl-tRNA--protein transferase from Oleidesulfovibrio alaskensis (strain ATCC BAA-1058 / DSM 17464 / G20) (Desulfovibrio alaskensis).